A 144-amino-acid chain; its full sequence is Putative golgin subfamily A member 2B (144 aa).

Disordered stretches follow at residues 1-20 and 95-132; these read MDSE…PEDL and SCGR…EAAG. A compositionally biased stretch (gly residues) spans 110 to 131; sequence AEGGGVHQQAGPGQGRGEGEAA.

Belongs to the GOLGA2 family.

This chain is Putative golgin subfamily A member 2B (GOLGA2P5), found in Homo sapiens (Human).